The primary structure comprises 569 residues: Urease subunit beta (569 aa).

The 439-residue stretch at 131–569 (GGIDTHIHFI…VSLAQLFSIF (439 aa)) folds into the Urease domain. Positions 136, 138, and 219 each coordinate Ni(2+). An N6-carboxylysine modification is found at K219. Substrate is bound at residue H221. H248 and H274 together coordinate Ni(2+). Catalysis depends on H322, which acts as the Proton donor. D362 provides a ligand contact to Ni(2+).

Belongs to the metallo-dependent hydrolases superfamily. Urease alpha subunit family. Heterohexamer of 3 UreA (alpha) and 3 UreB (beta) subunits. The cofactor is Ni cation. Post-translationally, carboxylation allows a single lysine to coordinate two nickel ions.

It localises to the cytoplasm. The catalysed reaction is urea + 2 H2O + H(+) = hydrogencarbonate + 2 NH4(+). It participates in nitrogen metabolism; urea degradation; CO(2) and NH(3) from urea (urease route): step 1/1. In Helicobacter pylori (strain HPAG1), this protein is Urease subunit beta.